The sequence spans 158 residues: Transcriptional repressor NrdR (158 aa).

Residues 1–22 (MRCPFCGSDDTQVKDSRPAEDN) are disordered. A zinc finger spans residues 3–34 (CPFCGSDDTQVKDSRPAEDNSAIRRRRICPDC). Over residues 11 to 22 (TQVKDSRPAEDN) the composition is skewed to basic and acidic residues. An ATP-cone domain is found at 49–139 (LTVLKKTGRK…VYRDFSHAED (91 aa)).

This sequence belongs to the NrdR family. Zn(2+) serves as cofactor.

In terms of biological role, negatively regulates transcription of bacterial ribonucleotide reductase nrd genes and operons by binding to NrdR-boxes. The chain is Transcriptional repressor NrdR from Allorhizobium ampelinum (strain ATCC BAA-846 / DSM 112012 / S4) (Agrobacterium vitis (strain S4)).